Reading from the N-terminus, the 221-residue chain is Deoxyribose-phosphate aldolase (221 aa).

Asp89 functions as the Proton donor/acceptor in the catalytic mechanism. Residue Lys151 is the Schiff-base intermediate with acetaldehyde of the active site. Lys180 acts as the Proton donor/acceptor in catalysis.

It belongs to the DeoC/FbaB aldolase family. DeoC type 1 subfamily.

It localises to the cytoplasm. The catalysed reaction is 2-deoxy-D-ribose 5-phosphate = D-glyceraldehyde 3-phosphate + acetaldehyde. Its pathway is carbohydrate degradation; 2-deoxy-D-ribose 1-phosphate degradation; D-glyceraldehyde 3-phosphate and acetaldehyde from 2-deoxy-alpha-D-ribose 1-phosphate: step 2/2. Catalyzes a reversible aldol reaction between acetaldehyde and D-glyceraldehyde 3-phosphate to generate 2-deoxy-D-ribose 5-phosphate. The sequence is that of Deoxyribose-phosphate aldolase from Brevibacillus brevis (strain 47 / JCM 6285 / NBRC 100599).